A 572-amino-acid polypeptide reads, in one-letter code: Sulfite reductase [NADPH] hemoprotein beta-component (572 aa).

[4Fe-4S] cluster-binding residues include C436, C442, C481, and C485. C485 lines the siroheme pocket.

Belongs to the nitrite and sulfite reductase 4Fe-4S domain family. As to quaternary structure, alpha(8)-beta(8). The alpha component is a flavoprotein, the beta component is a hemoprotein. It depends on siroheme as a cofactor. [4Fe-4S] cluster serves as cofactor.

The catalysed reaction is hydrogen sulfide + 3 NADP(+) + 3 H2O = sulfite + 3 NADPH + 4 H(+). It functions in the pathway sulfur metabolism; hydrogen sulfide biosynthesis; hydrogen sulfide from sulfite (NADPH route): step 1/1. In terms of biological role, component of the sulfite reductase complex that catalyzes the 6-electron reduction of sulfite to sulfide. This is one of several activities required for the biosynthesis of L-cysteine from sulfate. This Bacillus pumilus (strain SAFR-032) protein is Sulfite reductase [NADPH] hemoprotein beta-component.